A 117-amino-acid chain; its full sequence is DNA-directed RNA polymerase subunit omega (117 aa).

Residues 96 to 105 (KEEAEEEAKQ) show a composition bias toward basic and acidic residues. A disordered region spans residues 96–117 (KEEAEEEAKQKNSRAAKAAAAE). Residues 108–117 (SRAAKAAAAE) show a composition bias toward low complexity.

This sequence belongs to the RNA polymerase subunit omega family. As to quaternary structure, the RNAP catalytic core consists of 2 alpha, 1 beta, 1 beta' and 1 omega subunit. When a sigma factor is associated with the core the holoenzyme is formed, which can initiate transcription.

It catalyses the reaction RNA(n) + a ribonucleoside 5'-triphosphate = RNA(n+1) + diphosphate. Promotes RNA polymerase assembly. Latches the N- and C-terminal regions of the beta' subunit thereby facilitating its interaction with the beta and alpha subunits. This is DNA-directed RNA polymerase subunit omega from Lactococcus lactis subsp. cremoris (strain MG1363).